Reading from the N-terminus, the 475-residue chain is Argininosuccinate lyase (475 aa).

The protein belongs to the lyase 1 family. Argininosuccinate lyase subfamily.

It localises to the cytoplasm. The enzyme catalyses 2-(N(omega)-L-arginino)succinate = fumarate + L-arginine. The protein operates within amino-acid biosynthesis; L-arginine biosynthesis; L-arginine from L-ornithine and carbamoyl phosphate: step 3/3. The chain is Argininosuccinate lyase from Streptomyces coelicolor (strain ATCC BAA-471 / A3(2) / M145).